The primary structure comprises 517 residues: Sterol 14-alpha demethylase CYP51C (517 aa).

A helical membrane pass occupies residues 10-30; sequence TLPLSVSIPLTTSIIIILSIV. Tyr115 provides a ligand contact to lanosterol. Gly300 provides a ligand contact to itraconazole. Residue Cys458 coordinates heme.

The protein belongs to the cytochrome P450 family. It depends on heme as a cofactor.

Its subcellular location is the endoplasmic reticulum membrane. The protein operates within steroid metabolism; ergosterol biosynthesis. Its function is as follows. Together with cyp51A and cyp51B, encodes the sterol 14alpha-demethylase that plays a critical role in the third module of ergosterol biosynthesis pathway, being ergosterol the major sterol component in fungal membranes that participates in a variety of functions. Cyp51C does not seem to encode an active sterol 14-alpha-demethylase, but can impact indirectly on sterol 14alpha-demethylation, and is required for full virulence on host wheat ears, but not on Arabidopsis floral tissue or the fruits of apple and tomato. The third module or late pathway involves the ergosterol synthesis itself through consecutive reactions that mainly occur in the endoplasmic reticulum (ER) membrane. In filamentous fungi, during the initial step of this module, lanosterol (lanosta-8,24-dien-3beta-ol) can be metabolized to eburicol. Sterol 14alpha-demethylase catalyzes the three-step oxidative removal of the 14alpha-methyl group (C-32) of both these sterols in the form of formate, and converts eburicol and lanosterol to 14-demethyleburicol (4,4,24-trimethylergosta-8,14,24(28)-trienol) and 4,4-dimethyl-5alpha-cholesta-8,14,24-trien-3beta-ol, respectively, which are further metabolized by other enzymes in the pathway to ergosterol. The polypeptide is Sterol 14-alpha demethylase CYP51C (Gibberella zeae (strain ATCC MYA-4620 / CBS 123657 / FGSC 9075 / NRRL 31084 / PH-1) (Wheat head blight fungus)).